The following is a 453-amino-acid chain: Transcription factor radR (453 aa).

The segment covering 1–30 (MPNNLQHQEGSYSLRSSNDVSPADDWTQTN) has biased composition (polar residues). The tract at residues 1–45 (MPNNLQHQEGSYSLRSSNDVSPADDWTQTNDPKEKKRIQNRVAQR) is disordered. Residues 30-62 (NDPKEKKRIQNRVAQRTYRNRIRARLEELENKI) enclose the bZIP domain. Residues 33 to 50 (KEKKRIQNRVAQRTYRNR) are basic motif. Residues 51–58 (IRARLEEL) are leucine-zipper. Positions 160–184 (APRAAQARSIAPTSTGMHQISPSYG) are disordered. The segment covering 170 to 181 (APTSTGMHQISP) has biased composition (polar residues).

It belongs to the bZIP family.

Its subcellular location is the nucleus. Functionally, transcription factor that positively regulates the expression of the gene clusters that mediate the biosynthesis of pestheic acid, a diphenyl ether which is a biosynthetic precursor of the unique chloropupukeananes. This is Transcription factor radR from Floropilus chiversii (Chaetomium chiversii).